The sequence spans 154 residues: Fimbrial protein (154 aa).

A propeptide spans 1–6 (leader sequence); the sequence is MKAQKG. Phe7 is subject to N-methylphenylalanine. A helical transmembrane segment spans residues 7–27; the sequence is FTLIELMIVVAIIGILAAIAI. The cysteines at positions 133 and 151 are disulfide-linked. O-linked (FucNAc...) serine glycosylation is present at Ser154.

The protein belongs to the N-Me-Phe pilin family. As to quaternary structure, the pili are polar flexible filaments of about 5.4 nanometers diameter and 2.5 micrometers average length; they consist of only a single polypeptide chain arranged in a helical configuration of five subunits per turn in the assembled pilus. O-glycosylated; glycan consists of 5NbetaOHC47NFmPse(alpha2-4)Xyl(beta1-3)FucNAc in beta1-O linkage to Ser.

The protein resides in the fimbrium. It is found in the membrane. This chain is Fimbrial protein (pilA), found in Pseudomonas aeruginosa.